The chain runs to 78 residues: Protein EcdD (78 aa).

In terms of biological role, involved in the non-oxidative decarboxylation and detoxification of phenolic derivatives under anaerobic conditions, however the precise biochemical function in metabolism of phenolic acid is unknown. This is Protein EcdD from Escherichia coli O157:H7.